The chain runs to 400 residues: Tryptophan synthase beta chain (400 aa).

Lys95 is subject to N6-(pyridoxal phosphate)lysine.

This sequence belongs to the TrpB family. Tetramer of two alpha and two beta chains. Pyridoxal 5'-phosphate is required as a cofactor.

The enzyme catalyses (1S,2R)-1-C-(indol-3-yl)glycerol 3-phosphate + L-serine = D-glyceraldehyde 3-phosphate + L-tryptophan + H2O. It functions in the pathway amino-acid biosynthesis; L-tryptophan biosynthesis; L-tryptophan from chorismate: step 5/5. Functionally, the beta subunit is responsible for the synthesis of L-tryptophan from indole and L-serine. The protein is Tryptophan synthase beta chain of Chlorobaculum tepidum (strain ATCC 49652 / DSM 12025 / NBRC 103806 / TLS) (Chlorobium tepidum).